Consider the following 383-residue polypeptide: Succinyl-diaminopimelate desuccinylase (383 aa).

Histidine 73 contacts Zn(2+). Aspartate 75 is an active-site residue. Aspartate 107 provides a ligand contact to Zn(2+). Glutamate 141 (proton acceptor) is an active-site residue. 3 residues coordinate Zn(2+): glutamate 142, glutamate 170, and histidine 356.

Belongs to the peptidase M20A family. DapE subfamily. Homodimer. Zn(2+) is required as a cofactor. It depends on Co(2+) as a cofactor.

The enzyme catalyses N-succinyl-(2S,6S)-2,6-diaminopimelate + H2O = (2S,6S)-2,6-diaminopimelate + succinate. The protein operates within amino-acid biosynthesis; L-lysine biosynthesis via DAP pathway; LL-2,6-diaminopimelate from (S)-tetrahydrodipicolinate (succinylase route): step 3/3. Its function is as follows. Catalyzes the hydrolysis of N-succinyl-L,L-diaminopimelic acid (SDAP), forming succinate and LL-2,6-diaminopimelate (DAP), an intermediate involved in the bacterial biosynthesis of lysine and meso-diaminopimelic acid, an essential component of bacterial cell walls. The sequence is that of Succinyl-diaminopimelate desuccinylase from Pseudomonas putida (strain ATCC 700007 / DSM 6899 / JCM 31910 / BCRC 17059 / LMG 24140 / F1).